Reading from the N-terminus, the 301-residue chain is tRNA uridine(34) hydroxylase (301 aa).

A Rhodanese domain is found at 121–215 (RSDDVVLIDT…YLEEVPAENS (95 aa)). Cys-175 (cysteine persulfide intermediate) is an active-site residue.

This sequence belongs to the TrhO family.

The enzyme catalyses uridine(34) in tRNA + AH2 + O2 = 5-hydroxyuridine(34) in tRNA + A + H2O. In terms of biological role, catalyzes oxygen-dependent 5-hydroxyuridine (ho5U) modification at position 34 in tRNAs. This is tRNA uridine(34) hydroxylase from Ruegeria pomeroyi (strain ATCC 700808 / DSM 15171 / DSS-3) (Silicibacter pomeroyi).